Reading from the N-terminus, the 220-residue chain is 3-keto-L-gulonate-6-phosphate decarboxylase SgbH (220 aa).

Residue Asp11 participates in substrate binding. Glu33 and Asp62 together coordinate Mg(2+). Arg192 provides a ligand contact to substrate.

The protein belongs to the HPS/KGPDC family. KGPDC subfamily. As to quaternary structure, homodimer. Mg(2+) is required as a cofactor.

It carries out the reaction 3-dehydro-L-gulonate 6-phosphate + H(+) = L-xylulose 5-phosphate + CO2. Catalyzes the decarboxylation of 3-keto-L-gulonate-6-P into L-xylulose-5-P. May be involved in the utilization of 2,3-diketo-L-gulonate. The chain is 3-keto-L-gulonate-6-phosphate decarboxylase SgbH (sgbH) from Escherichia coli (strain K12).